The primary structure comprises 288 residues: Shikimate dehydrogenase (NADP(+)) (288 aa).

Residues 18 to 20 (SRS) and Thr65 contribute to the shikimate site. Lys69 acts as the Proton acceptor in catalysis. Glu81 provides a ligand contact to NADP(+). Shikimate-binding residues include Asn90 and Asp106. NADP(+) contacts are provided by residues 131–135 (GAGGA), 155–160 (NRTLAK), and Met223. Position 225 (Tyr225) interacts with shikimate. NADP(+) is bound at residue Gly246.

It belongs to the shikimate dehydrogenase family. As to quaternary structure, homodimer.

The enzyme catalyses shikimate + NADP(+) = 3-dehydroshikimate + NADPH + H(+). The protein operates within metabolic intermediate biosynthesis; chorismate biosynthesis; chorismate from D-erythrose 4-phosphate and phosphoenolpyruvate: step 4/7. In terms of biological role, involved in the biosynthesis of the chorismate, which leads to the biosynthesis of aromatic amino acids. Catalyzes the reversible NADPH linked reduction of 3-dehydroshikimate (DHSA) to yield shikimate (SA). The sequence is that of Shikimate dehydrogenase (NADP(+)) from Verminephrobacter eiseniae (strain EF01-2).